The primary structure comprises 236 residues: 15,16-dihydrobiliverdin:ferredoxin oxidoreductase (236 aa).

It belongs to the HY2 family.

It carries out the reaction 15,16-dihydrobiliverdin + oxidized 2[4Fe-4S]-[ferredoxin] = biliverdin IXalpha + reduced 2[4Fe-4S]-[ferredoxin] + 2 H(+). Its function is as follows. Catalyzes the two-electron reduction of biliverdin IX-alpha at the C15 methine bridge. This is 15,16-dihydrobiliverdin:ferredoxin oxidoreductase from Prochlorococcus marinus (strain MIT 9312).